The chain runs to 298 residues: Protease HtpX homolog (298 aa).

The next 2 helical transmembrane spans lie at 14-34 and 39-59; these read VVLLVVFFALLALIGASAGYL and YAMGLVLALVIGVIYATSMIF. Residue His143 coordinates Zn(2+). Glu144 is an active-site residue. Residue His147 participates in Zn(2+) binding. The next 2 membrane-spanning stretches (helical) occupy residues 158 to 178 and 197 to 217; these read IAVALASAVTVISSIGGRMLW and IITLLLSLLSLLLAPLVASLI. Glu226 contacts Zn(2+).

It belongs to the peptidase M48B family. The cofactor is Zn(2+).

It is found in the cell membrane. This chain is Protease HtpX homolog, found in Streptococcus pyogenes serotype M1.